The primary structure comprises 290 residues: 4-hydroxybenzoate octaprenyltransferase (290 aa).

A run of 6 helical transmembrane segments spans residues 41–61, 89–109, 133–153, 158–178, 202–224, and 269–289; these read WPLV…GCAM, WEAV…ILPL, FFAI…PMAF, GTVP…SVAY, FGRF…YAWI, and WLGG…GAAG.

Belongs to the UbiA prenyltransferase family. Mg(2+) serves as cofactor.

It localises to the cell inner membrane. The enzyme catalyses all-trans-octaprenyl diphosphate + 4-hydroxybenzoate = 4-hydroxy-3-(all-trans-octaprenyl)benzoate + diphosphate. The protein operates within cofactor biosynthesis; ubiquinone biosynthesis. Its function is as follows. Catalyzes the prenylation of para-hydroxybenzoate (PHB) with an all-trans polyprenyl group. Mediates the second step in the final reaction sequence of ubiquinone-8 (UQ-8) biosynthesis, which is the condensation of the polyisoprenoid side chain with PHB, generating the first membrane-bound Q intermediate 3-octaprenyl-4-hydroxybenzoate. This Burkholderia vietnamiensis (strain G4 / LMG 22486) (Burkholderia cepacia (strain R1808)) protein is 4-hydroxybenzoate octaprenyltransferase.